A 437-amino-acid polypeptide reads, in one-letter code: 5-hydroxytryptamine receptor 3B (437 aa).

The N-terminal stretch at 1–21 (MILLWSCLLVAVVGILGTATP) is a signal peptide. Topologically, residues 22–235 (QPGNSSLHRL…RFNVVIRRCP (214 aa)) are extracellular. N-linked (GlcNAc...) asparagine glycosylation is found at asparagine 25, asparagine 92, and asparagine 134. Residues cysteine 151 and cysteine 165 are joined by a disulfide bond. Residues 236-255 (LAYVVSLLIPSIFLMLVDLG) form a helical membrane-spanning segment. At 256–266 (SFYLPPNCRAR) the chain is on the cytoplasmic side. Residues 267 to 284 (IVFKTNVLVGYTVFRVNM) traverse the membrane as a helical segment. Topologically, residues 285–295 (SDEVPRSAGCT) are extracellular. A helical transmembrane segment spans residues 296–324 (SLIGVFFTVCMALLVLSLSKSILLIKFLY). At 325–410 (EERHSEQERP…WLAILCHFDQ (86 aa)) the chain is on the cytoplasmic side. The HA-stretch; determines single-channel conductance in 5-HT3 receptors stretch occupies residues 377-409 (FWFQLQSINNSLRTRDQVYQKEVEWLAILCHFD). A helical membrane pass occupies residues 411–434 (LLFRIYLAVLGLYTVTLCSLWALW). Residues 435–437 (SRM) lie on the Extracellular side of the membrane.

The protein belongs to the ligand-gated ion channel (TC 1.A.9) family. 5-hydroxytryptamine receptor (TC 1.A.9.2) subfamily. HTR3B sub-subfamily. Forms homopentameric as well as heteropentameric serotonin-activated cation-selective channel complexes with HTR3A. The homomeric complex is not functional. Heteropentameric complexes display properties which resemble that of neuronal serotonin-activated channels in vivo. Post-translationally, N-glycosylation is required for membrane localization. As to expression, expressed in peripheral neurons, but not in neurons of the central nervous system.

Its subcellular location is the postsynaptic cell membrane. It is found in the cell membrane. The enzyme catalyses Na(+)(in) = Na(+)(out). The catalysed reaction is K(+)(in) = K(+)(out). It carries out the reaction Ca(2+)(in) = Ca(2+)(out). In terms of biological role, forms serotonin (5-hydroxytryptamine/5-HT3)-activated cation-selective channel complexes, which when activated cause fast, depolarizing responses in neurons. The chain is 5-hydroxytryptamine receptor 3B from Rattus norvegicus (Rat).